The following is a 226-amino-acid chain: 7-carboxy-7-deazaguanine synthase (226 aa).

Substrate is bound by residues 10–12 (LQG) and R25. Positions 16–221 (YTGIPCIFVR…LQTHKFIWTP (206 aa)) constitute a Radical SAM core domain. Residues C29, C33, and C36 each contribute to the [4Fe-4S] cluster site. S38 serves as a coordination point for Mg(2+). T69 lines the substrate pocket. G71 serves as a coordination point for S-adenosyl-L-methionine.

The protein belongs to the radical SAM superfamily. 7-carboxy-7-deazaguanine synthase family. As to quaternary structure, homodimer. Requires [4Fe-4S] cluster as cofactor. S-adenosyl-L-methionine is required as a cofactor. It depends on Mg(2+) as a cofactor.

It catalyses the reaction 6-carboxy-5,6,7,8-tetrahydropterin + H(+) = 7-carboxy-7-deazaguanine + NH4(+). It functions in the pathway purine metabolism; 7-cyano-7-deazaguanine biosynthesis. In terms of biological role, catalyzes the complex heterocyclic radical-mediated conversion of 6-carboxy-5,6,7,8-tetrahydropterin (CPH4) to 7-carboxy-7-deazaguanine (CDG), a step common to the biosynthetic pathways of all 7-deazapurine-containing compounds. In Koribacter versatilis (strain Ellin345), this protein is 7-carboxy-7-deazaguanine synthase.